We begin with the raw amino-acid sequence, 701 residues long: Type 3 secretion system secretin (701 aa).

A signal peptide spans 1–21 (MRKALMWLPLLLIGLSPATWA). A compositionally biased stretch (gly residues) spans 229 to 238 (RGNGLAGGGS). A disordered region spans residues 229-252 (RGNGLAGGGSPDTPSLPMSSSGLD). Residues 240-252 (DTPSLPMSSSGLD) show a composition bias toward polar residues.

It belongs to the bacterial secretin family. T3SS SctC subfamily. As to quaternary structure, the core secretion machinery of the T3SS is composed of approximately 20 different proteins, including cytoplasmic components, a base, an export apparatus and a needle. This subunit is part of the base, which anchors the injectisome in the bacterial cell envelope. Forms a stable homooligomeric complex.

The protein localises to the cell outer membrane. Its function is as follows. Component of the type III secretion system (T3SS), also called injectisome, which is used to inject bacterial effector proteins into eukaryotic host cells. Forms a ring-shaped multimeric structure with an apparent central pore in the outer membrane. Involved in the secretion of a proteinaceous elicitor of the hypersensitivity response in plants. This is Type 3 secretion system secretin from Pseudomonas syringae pv. syringae.